Reading from the N-terminus, the 652-residue chain is Transmembrane 9 superfamily member 12 (652 aa).

Residues 1–20 (MFGVYRVFVLLVFVSQLCNG) form the signal peptide. At 21-286 (FYLPGSYMHT…LKMEGARVHW (266 aa)) the chain is on the lumenal side. Residues 287-307 (FSILNSLMVIFFLAGIVFVIF) form a helical membrane-spanning segment. Residues 308-362 (LRTVRRDLTKYEELDKEAQAQMNEELSGWKLVVGDVFREPEMSKLLCIMVGDGVR) lie on the Cytoplasmic side of the membrane. A helical membrane pass occupies residues 363 to 383 (ITGMAVVTIVFAALGFMSPAS). Topologically, residues 384–386 (RGM) are lumenal. A helical membrane pass occupies residues 387 to 407 (LLTGMIILYLFLGIVAGYAGV). The Cytoplasmic segment spans residues 408–426 (RLWRTVKGTSEGWRSLSWS). The chain crosses the membrane as a helical span at residues 427-447 (IACFFPGIAFVILTVLNFLLW). Residues 448–460 (SSNSTGAIPISLY) are Lumenal-facing. The helical transmembrane segment at 461–481 (FELLALWFCISVPLTLFGGFL) threads the bilayer. Over 482–510 (GTRAEAIQFPVRTNQIPREIPERKYPSWL) the chain is Cytoplasmic. A helical membrane pass occupies residues 511–531 (LVLGAGTLPFGTLFIELFFIF). At 532 to 541 (SSIWLGRFYY) the chain is on the lumenal side. A helical membrane pass occupies residues 542–562 (VFGFLLIVLLLLVVVCAEVSV). Over 563-580 (VLTYMHLCVEDWRWWWKA) the chain is Cytoplasmic. The chain crosses the membrane as a helical span at residues 581 to 601 (FYASGSVALYVFAYSINYLVF). The Lumenal segment spans residues 602–613 (DLQSLSGPVSAM). A helical membrane pass occupies residues 614-634 (LYIGYSLLMAIAIMLATGTIG). Residues 635-652 (FLTSFYFVHYLFSSVKID) are Cytoplasmic-facing. The Endoplasmic reticulum export signal signature appears at 641–646 (FVHYLF). A Golgi retention signal motif is present at residues 650–652 (KID).

The protein belongs to the nonaspanin (TM9SF) (TC 9.A.2) family.

It localises to the endosome membrane. The protein resides in the golgi apparatus membrane. This Arabidopsis thaliana (Mouse-ear cress) protein is Transmembrane 9 superfamily member 12.